The sequence spans 1527 residues: MNRVSVLSKYQCLKINSPNRFFSKYFTTSTINSTKITNDQSQTNSAGKEISQPILKSQDKLKKSILKTSTDTNFLKDINKKHRQHYIKPQKDDENIILKTLNDLKTNNLNTKELISDRLSELFLNKEMIKLISENEIESINEIFKIVLGAKKSQQPPTVAFFTKSFLNKSSKEFKMKLDSLPIIVYFLSVFESKDIMKSSDSDSDSTATNNYLTVGKGISKKFIQNFQDSISSELDITDLQEHLSDMIKLSKFSRLLGYLTNVEISRDKIKKLKDKNEIFNQLINEFGENINEIEFQNLFKNEIHFISFLLTLSRNQIITILSISNNSCYEEEEEVEEVEEVNVKGEGGELFKRVDKYEDNNKGIFNQNKIKSLIENIPVSKVRERLYWFLLMAKLRYPISENYFNDIEISLHYEKDPSFILFFFNHFKIFGYIPSDSSEAKIFQRYVRVATLDEALHYFDSIKKKPQSLNIIMITHLLLAMNKFNNQLDRKIIIDSTTNTTTNTTINTTINNNKIKKYQRSIENEMLTLYSSKIKDIIGSNSSLYNFTLSQLLHGEKWRKVLFNTLVTQLIEKHINSVTDETLLIINEYFSIHKDDVILKKLYELSKKIHLSKELLSNLTIQFLIHKRDYSNAINSLIELYKQETPILKSTLKLLIKSDPTHPILFEFYKTLPQQFELIEPTNQEQEQDQQDQPPPPQQQQEQQQEQQQQQEQQQQQDQQQQDQQQDQQEKQQIKEIKPKLKEKLESEKLINSELFLECINDPMKLYRILDGKIEILASTFQSIVMKSLESGKYQFVESIISKRFGDSSKSIDKHLLSKLITIPNLPISKDDPYNIEKLLLTNNRSENLALYNKLFNLSLNNGLLNCAKNYILKIIQQSNQRLVTSLCYQGEEALIYSYILSLNNLNIINNNQENNNNNNNDLKETIENQIIKWIESVFGCNSLNEINNDDFVFSILLGFHHSTSAYYKKQIGNLNEQQQLPSSLYLKIRSNLMQVINKYFDLIVLDRMILSSYGLESKYYGEAIDFQKDFISMITINELYQYTILKLNLLEKKNNNNNNNNNNNSYYRISIDKKFIENNDQSFNEIDLLLKNISTKQISVIVPFLMGFIENPSLMKYLSVILSNDLNKYDTATTTTTTTTIGNNFIQRLMESSSNSKEIDFLNISNTFFFKYFISVGDLKSAFKVHFKQIHILIRFRLIQDILKNQPLVMDHIFKIISSELELEQQQQQQQQQQQQQQQQQQQQQQQQQQKSSSPSLDYGLIESLLSVTSILNDSKSIHFSLKLYNLASEHAKLNNSRIPLSITNSKDLVLSGFKNRNDHFQLSENLKISDIEKQMKQTRGAGADGADEIIIKNHLTSSQLLNDIKYILIHSNYKQLKGIGFGVLRGDIPFTINDKIKVFLLVEAFAAEEGREKVNSFLNTPSLLNNSLDFELLRTPKITKLISFIFRTNSSIKHDSNYFPEFSPDFLPNKFKFYSAHLEDINNNDNDNSIQDISNIVNCNSGPESFYYRKVLKYFFKKRILKNL.

4 coiled-coil regions span residues 262–293 (NVEISRDKIKKLKDKNEIFNQLINEFGENINE), 699–751 (QQQQ…SEKL), 905–932 (NNLNIINNNQENNNNNNNDLKETIENQI), and 1217–1255 (KIISSELELEQQQQQQQQQQQQQQQQQQQQQQQQQQKSS). Positions 683 to 734 (TNQEQEQDQQDQPPPPQQQQEQQQEQQQQQEQQQQQDQQQQDQQQDQQEKQQ) are disordered. Residues 700-728 (QQQEQQQEQQQQQEQQQQQDQQQQDQQQD) show a composition bias toward low complexity.

This is an uncharacterized protein from Dictyostelium discoideum (Social amoeba).